Consider the following 739-residue polypeptide: Phosphoribosylformylglycinamidine synthase subunit PurL (739 aa).

Histidine 52 is an active-site residue. Residues tyrosine 55 and lysine 94 each coordinate ATP. Glutamate 96 serves as a coordination point for Mg(2+). Substrate contacts are provided by residues serine 97–histidine 100 and arginine 119. The Proton acceptor role is filled by histidine 98. Aspartate 120 is a binding site for Mg(2+). Glutamine 243 contributes to the substrate binding site. Aspartate 273 is a Mg(2+) binding site. Glutamate 317–glutamine 319 is a substrate binding site. ATP contacts are provided by aspartate 500 and glycine 537. Asparagine 538 is a binding site for Mg(2+). Substrate is bound at residue serine 540.

This sequence belongs to the FGAMS family. Monomer. Part of the FGAM synthase complex composed of 1 PurL, 1 PurQ and 2 PurS subunits.

The protein resides in the cytoplasm. The catalysed reaction is N(2)-formyl-N(1)-(5-phospho-beta-D-ribosyl)glycinamide + L-glutamine + ATP + H2O = 2-formamido-N(1)-(5-O-phospho-beta-D-ribosyl)acetamidine + L-glutamate + ADP + phosphate + H(+). It participates in purine metabolism; IMP biosynthesis via de novo pathway; 5-amino-1-(5-phospho-D-ribosyl)imidazole from N(2)-formyl-N(1)-(5-phospho-D-ribosyl)glycinamide: step 1/2. Functionally, part of the phosphoribosylformylglycinamidine synthase complex involved in the purines biosynthetic pathway. Catalyzes the ATP-dependent conversion of formylglycinamide ribonucleotide (FGAR) and glutamine to yield formylglycinamidine ribonucleotide (FGAM) and glutamate. The FGAM synthase complex is composed of three subunits. PurQ produces an ammonia molecule by converting glutamine to glutamate. PurL transfers the ammonia molecule to FGAR to form FGAM in an ATP-dependent manner. PurS interacts with PurQ and PurL and is thought to assist in the transfer of the ammonia molecule from PurQ to PurL. This Enterococcus faecalis (strain ATCC 700802 / V583) protein is Phosphoribosylformylglycinamidine synthase subunit PurL.